The sequence spans 567 residues: Putative laccase-17 (567 aa).

The N-terminal stretch at 1 to 22 is a signal peptide; the sequence is MPSRGCSCWLLSLALLCSLAAA. 2 consecutive Plastocyanin-like domains span residues 30–146 and 158–310; these read VIRE…PRDG and ELAP…YGAA. Asn76 carries an N-linked (GlcNAc...) asparagine glycan. Residues His80, His82, His125, and His127 each coordinate Cu cation. N-linked (GlcNAc...) asparagine glycans are attached at residues Asn187, Asn241, Asn298, Asn312, Asn327, Asn365, Asn368, Asn378, Asn388, and Asn430. One can recognise a Plastocyanin-like 3 domain in the interval 415-551; the sequence is DFPANPPVQF…AMAFLVDDGV (137 aa). His468, His471, His473, His530, Cys531, His532, and His536 together coordinate Cu cation.

The protein belongs to the multicopper oxidase family. The cofactor is Cu cation.

The protein resides in the secreted. The protein localises to the extracellular space. It is found in the apoplast. It catalyses the reaction 4 hydroquinone + O2 = 4 benzosemiquinone + 2 H2O. In terms of biological role, lignin degradation and detoxification of lignin-derived products. The protein is Putative laccase-17 (LAC17) of Oryza sativa subsp. japonica (Rice).